The chain runs to 169 residues: Small ribosomal subunit protein bS18c (169 aa).

Residues 1 to 61 (MYTSKQPFLK…RRPRIGPGDR (61 aa)) form a disordered region. The segment covering 27–55 (QTFRKSKQTFRKFKQPFRKSKQPFRRRPR) has biased composition (basic residues).

Belongs to the bacterial ribosomal protein bS18 family. In terms of assembly, part of the 30S ribosomal subunit.

It localises to the plastid. The protein localises to the chloroplast. The polypeptide is Small ribosomal subunit protein bS18c (Agrostis stolonifera (Creeping bentgrass)).